The sequence spans 843 residues: MSFPPHLNRPPMGIPALPPGIPPPQFPGFPPPVPPGTPMIPVPMSIMAPAPTVLVPTVSMVGKHLGARKDHPGLKAKENDENCGPTTTVFVGNISEKASDMLIRQLLAKCGLVLSWKRVQGASGKLQAFGFCEYKEPESTLRALRLLHDLQIGEKKLLVKVDAKTKAQLDEWKAKKKASNGNARPETVTNDDEEALDEETKRRDQMIKGAIEVLIREYSSELNAPSQESDSHPRKKKKEKKEDIFRRFPVAPLIPYPLITKEDINAIEMEEDKRDLISREISKFRDTHKKLEEEKGKKEKERQEIEKERRERERERERERERREREREREREREREKEKERERERERDRDRDRTKERDRDRDRERDRDRDRERSSDRNKDRSRSREKSRDREREREREREREREREREREREREREREREREREREKDKKRDREEDEEDAYERRKLERKLREKEAAYQERLKNWEIRERKKTREYEKEAEREEERRREMAKEAKRLKEFLEDYDDDRDDPKYYRGSALQKRLRDREKEMEADERDRKREKEELEEIRQRLLAEGHPDPDAELQRMEQEAERRRQPQIKQEPESEEEEEEKQEKEEKREEPMEEEEEPEQKPCLKPTLRPISSAPSVSSASGNATPNTPGDESPCGIIIPHENSPDQQQPEEHRPKIGLSLKLGASNSPGQPNSVKRKKLPVDSVFNKFEDEDSDDVPRKRKLVPLDYGEDDKNATKGTVNTEEKRKHIKSLIEKIPTAKPELFAYPLDWSIVDSILMERRIRPWINKKIIEYIGEEEATLVDFVCSKVMAHSSPQSILDDVAMVLDEEAEVFIVKMWRLLIYETEAKKIGLVK.

The interval 1–30 (MSFPPHLNRPPMGIPALPPGIPPPQFPGFP) is disordered. A compositionally biased stretch (pro residues) spans 12–30 (MGIPALPPGIPPPQFPGFP). An RRM domain is found at 87–164 (TTVFVGNISE…KKLLVKVDAK (78 aa)). The residue at position 135 (K135) is an N6-acetyllysine. Disordered stretches follow at residues 171–202 (EWKAKKKASNGNARPETVTNDDEEALDEETKR) and 219–243 (SSELNAPSQESDSHPRKKKKEKKED). Residues S226 and S229 each carry the phosphoserine modification. Glycyl lysine isopeptide (Lys-Gly) (interchain with G-Cter in SUMO2) cross-links involve residues K261, K273, and K430. Basic and acidic residues-rich tracts occupy residues 280 to 433 (EISK…KRDR) and 521 to 573 (RLRD…ERRR). Disordered stretches follow at residues 280–442 (EISK…DAYE) and 498–688 (EFLE…KRKK). Positions 285–644 (RDTHKKLEEE…PNTPGDESPC (360 aa)) are necessary for nuclear speckle localization. Residue K578 forms a Glycyl lysine isopeptide (Lys-Gly) (interchain with G-Cter in SUMO2) linkage. Position 583 is a phosphoserine (S583). Positions 590–599 (KQEKEEKREE) are enriched in basic and acidic residues. Positions 621–630 (SSAPSVSSAS) are enriched in low complexity. K671 is covalently cross-linked (Glycyl lysine isopeptide (Lys-Gly) (interchain with G-Cter in SUMO2)). Residues 674–683 (ASNSPGQPNS) show a composition bias toward polar residues. S677 and S683 each carry phosphoserine. Glycyl lysine isopeptide (Lys-Gly) (interchain with G-Cter in SUMO2) cross-links involve residues K688 and K697. S703 is subject to Phosphoserine. K722 participates in a covalent cross-link: Glycyl lysine isopeptide (Lys-Gly) (interchain with G-Cter in SUMO2). Residues 750-843 (PELFAYPLDW…TEAKKIGLVK (94 aa)) enclose the PWI domain.

In terms of assembly, interacts with LUC7L3 and SRRM1. Specifically associates with functional splicing complexes, including Sm proteins and U1, U2, U4, U5 and U6 snRNAs. Associates with exon junction complex (EJC) proteins, including APEX1, DDX39B, NCBP1, RBM8A and RNPS1. Interaction with NCBP1 is RNA-dependent. Sumoylated.

The protein localises to the nucleus speckle. It localises to the cytoplasm. RNA-binding protein that acts as a regulator of alternative pre-mRNA splicing. Involved in apoptotic cell death through the regulation of the apoptotic factor BCL2L1 isoform expression. Modulates the ratio of proapoptotic BCL2L1 isoform S to antiapoptotic BCL2L1 isoform L mRNA expression. When overexpressed, stimulates proapoptotic BCL2L1 isoform S 5'-splice site (5'-ss) selection, whereas its depletion caused the accumulation of antiapoptotic BCL2L1 isoform L. Promotes BCL2L1 isoform S 5'-ss usage through the 5'-CGGGCA-3' RNA sequence. Its association with LUC7L3 promotes U1 snRNP binding to a weak 5' ss in a 5'-CGGGCA-3'-dependent manner. Binds to the exonic splicing enhancer 5'-CGGGCA-3' RNA sequence located within exon 2 of the BCL2L1 pre-mRNA. Also involved in the generation of an abnormal and truncated splice form of SCN5A in heart failure. This Homo sapiens (Human) protein is RNA-binding protein 25 (RBM25).